A 384-amino-acid chain; its full sequence is Probable splicing factor YJU2B (384 aa).

The tract at residues 1–28 (MGERKGTNKYYPPDFDPAKHGSLNGYRN) is disordered. Residues 183–212 (NSLLRSKFREEKKQIKEEEERDQALLTKAS) adopt a coiled-coil conformation. Residues 275 to 331 (GIRTKTPSVPGISPVSLGVVRRTSKEENKAEDKSVESPDGSRSRKAEGMCRKEETGC) are disordered. A compositionally biased stretch (basic and acidic residues) spans 297–331 (TSKEENKAEDKSVESPDGSRSRKAEGMCRKEETGC).

It belongs to the CWC16 family.

It is found in the nucleus. In terms of biological role, may be involved in mRNA splicing. This chain is Probable splicing factor YJU2B (yju2b), found in Xenopus laevis (African clawed frog).